Consider the following 119-residue polypeptide: Large ribosomal subunit protein bL17 (119 aa).

Belongs to the bacterial ribosomal protein bL17 family. In terms of assembly, part of the 50S ribosomal subunit. Contacts protein L32.

The sequence is that of Large ribosomal subunit protein bL17 from Mycoplasma mycoides subsp. mycoides SC (strain CCUG 32753 / NCTC 10114 / PG1).